Consider the following 196-residue polypeptide: Carnitine operon protein CaiE (196 aa).

The tract at residues 176-196 (LRQMEENRPRLQGTTDVAPKR) is disordered.

The protein belongs to the transferase hexapeptide repeat family.

It participates in amine and polyamine metabolism; carnitine metabolism. In terms of biological role, overproduction of CaiE stimulates the activity of CaiB and CaiD. This chain is Carnitine operon protein CaiE, found in Escherichia fergusonii (strain ATCC 35469 / DSM 13698 / CCUG 18766 / IAM 14443 / JCM 21226 / LMG 7866 / NBRC 102419 / NCTC 12128 / CDC 0568-73).